We begin with the raw amino-acid sequence, 359 residues long: Cinnamyl alcohol dehydrogenase 8 (359 aa).

Position 46 (cysteine 46) interacts with Zn(2+). Residue serine 48 coordinates NADP(+). Residues histidine 68, glutamate 69, cysteine 99, cysteine 102, cysteine 105, cysteine 113, and cysteine 162 each coordinate Zn(2+). NADP(+)-binding positions include threonine 166, 187–192 (GLGGLG), 210–215 (STSEKK), threonine 250, glycine 274, and 297–299 (SMI).

This sequence belongs to the zinc-containing alcohol dehydrogenase family. Homodimer. Requires Zn(2+) as cofactor. Expressed in the differentiation and elongation zones of primary and lateral roots. Expressed in the hypocotyl, cotyledon veins, vasculature of the first rosette leaves, hydathodes and trichomes. In stems, expressed in the vascular cambium and developing xylem tissues. Expressed in the style, anthers, stamen filaments, stigmatic regions in flowers, and abscission and style regions of siliques.

The enzyme catalyses (E)-cinnamyl alcohol + NADP(+) = (E)-cinnamaldehyde + NADPH + H(+). The protein operates within aromatic compound metabolism; phenylpropanoid biosynthesis. In terms of biological role, involved in lignin biosynthesis. Catalyzes the final step specific for the production of lignin monomers. Catalyzes the NADPH-dependent reduction of coniferaldehyde, 5-hydroxyconiferaldehyde, sinapaldehyde, 4-coumaraldehyde and caffeyl aldehyde to their respective alcohols. In Arabidopsis thaliana (Mouse-ear cress), this protein is Cinnamyl alcohol dehydrogenase 8 (CAD8).